The chain runs to 276 residues: Phosphate import ATP-binding protein PstB 2 (276 aa).

The ABC transporter domain occupies methionine 22–valine 262. Glycine 54–threonine 61 provides a ligand contact to ATP.

It belongs to the ABC transporter superfamily. Phosphate importer (TC 3.A.1.7) family. In terms of assembly, the complex is composed of two ATP-binding proteins (PstB), two transmembrane proteins (PstC and PstA) and a solute-binding protein (PstS).

The protein localises to the cell membrane. It catalyses the reaction phosphate(out) + ATP + H2O = ADP + 2 phosphate(in) + H(+). In terms of biological role, part of the ABC transporter complex PstSACB involved in phosphate import. Responsible for energy coupling to the transport system. The protein is Phosphate import ATP-binding protein PstB 2 of Mycobacterium bovis (strain ATCC BAA-935 / AF2122/97).